A 215-amino-acid chain; its full sequence is MSKVYDWFEERLEIQAIADDITSKYVPPHVNIFHCLGGITLTCFLVQVATGFAMTFYYRPTVTEAFASVQYIMTEANFGWLIRSVHRWSASMMVLMMILHVFRVYLTGGFKKPRELTWVTGVVLAVLTASFGVTGYSLPWDQIGYWAVKIVTGVPEAIPIVGSPLVELLRGSASVGQSTLTRFYSLHTFVLPLLTAVFMLMHFSMIRKQGISGPL.

The chain crosses the membrane as a helical span at residues 32–52 (IFHCLGGITLTCFLVQVATGF). Cys-35 contributes to the heme c binding site. 2 residues coordinate heme b: His-86 and His-100. 3 helical membrane passes run 90–110 (ASMM…TGGF), 116–136 (LTWV…VTGY), and 186–206 (LHTF…FSMI). Residues His-187 and His-202 each contribute to the heme b site.

Belongs to the cytochrome b family. PetB subfamily. As to quaternary structure, the 4 large subunits of the cytochrome b6-f complex are cytochrome b6, subunit IV (17 kDa polypeptide, PetD), cytochrome f and the Rieske protein, while the 4 small subunits are PetG, PetL, PetM and PetN. The complex functions as a dimer. Requires heme b as cofactor. The cofactor is heme c.

It is found in the plastid. The protein localises to the chloroplast thylakoid membrane. Component of the cytochrome b6-f complex, which mediates electron transfer between photosystem II (PSII) and photosystem I (PSI), cyclic electron flow around PSI, and state transitions. The polypeptide is Cytochrome b6 (Nymphaea alba (White water-lily)).